We begin with the raw amino-acid sequence, 1301 residues long: DNA-directed RNA polymerase subunit beta (1301 aa).

The protein belongs to the RNA polymerase beta chain family. In plastids the minimal PEP RNA polymerase catalytic core is composed of four subunits: alpha, beta, beta', and beta''. When a (nuclear-encoded) sigma factor is associated with the core the holoenzyme is formed, which can initiate transcription.

Its subcellular location is the plastid. The protein resides in the chloroplast. It carries out the reaction RNA(n) + a ribonucleoside 5'-triphosphate = RNA(n+1) + diphosphate. Functionally, DNA-dependent RNA polymerase catalyzes the transcription of DNA into RNA using the four ribonucleoside triphosphates as substrates. In Chlorella vulgaris (Green alga), this protein is DNA-directed RNA polymerase subunit beta.